Consider the following 214-residue polypeptide: Nodulation protein A (214 aa).

Belongs to the NodA family.

It localises to the cytoplasm. Its function is as follows. N-acyltransferase required for nodulation. Acts in the production of a small, heat-stable compound (Nod) that stimulates mitosis in various plant protoplasts. This is Nodulation protein A from Methylobacterium nodulans (strain LMG 21967 / CNCM I-2342 / ORS 2060).